Reading from the N-terminus, the 720-residue chain is Hexanoyl-CoA synthase (720 aa).

Residues 242 to 262 form a helical membrane-spanning segment; that stretch reads VDAVVIYLAIVLAGYVVVSIA. 290–293 serves as a coordination point for CoA; the sequence is RGKK. ATP is bound by residues 477-479, 499-504, Glu-585, and Arg-607; these read GEA and EMCGGT. Gly-615 lines the CoA pocket. Residue Lys-618 participates in ATP binding. Gln-681 lines the CoA pocket.

Belongs to the ATP-dependent AMP-binding enzyme family. It depends on Mg(2+) as a cofactor. Accumulates in glandular trichomes, especially in female flowers. Present at low levels in roots, stems and leaves.

It is found in the cytoplasm. Its subcellular location is the cytosol. The protein localises to the membrane. It carries out the reaction hexanoate + ATP + CoA = hexanoyl-CoA + AMP + diphosphate. It functions in the pathway secondary metabolite biosynthesis; terpenoid biosynthesis. Inhibitied by high CoA concentrations. Its function is as follows. Involved in the biosynthesis of cannabinoids-related terpenophenolic natural products, which have pharmacological activity. Acyl-activating enzyme that catalyzes the conversion of hexanoic acid to hexanoyl-CoA, precursor of the cannabinoid pathway. Can also activate other fatty acids including heptanoate, octanoate and nonanoate. This chain is Hexanoyl-CoA synthase, found in Cannabis sativa (Hemp).